Here is a 185-residue protein sequence, read N- to C-terminus: MKLFSRTSLVALGTAAAITLSGVTAPAFADEDSNAAVSALKTAEDNTPEAPGASTPLKLEQPGTITGVPGKAITPVTVKVVAGEAESFTSDNLPSGLLIDNTGKITGTPKKEFTGSAKIIAKNEAGVEAEVYVNFDFNEEPSSEEPSSGSSDTDNIENWIKIITAVIGALTTILTFSTKLDSFLK.

The first 29 residues, 1–29 (MKLFSRTSLVALGTAAAITLSGVTAPAFA), serve as a signal peptide directing secretion. Residues 41-66 (KTAEDNTPEAPGASTPLKLEQPGTIT) are disordered.

Post-translationally, glycosylated; by Pmt.

It is found in the secreted. This is an uncharacterized protein from Corynebacterium glutamicum (strain ATCC 13032 / DSM 20300 / JCM 1318 / BCRC 11384 / CCUG 27702 / LMG 3730 / NBRC 12168 / NCIMB 10025 / NRRL B-2784 / 534).